The primary structure comprises 196 residues: Phosphoheptose isomerase (196 aa).

The SIS domain occupies 35–194 (LTACLRCGGK…EKELFTPSGQ (160 aa)). Position 50–52 (50–52 (NGG)) interacts with substrate. Zn(2+) is bound by residues His59 and Glu63. Residues Glu63, 92 to 93 (ND), 118 to 120 (STS), Ser123, and Gln170 each bind substrate. 2 residues coordinate Zn(2+): Gln170 and His178.

It belongs to the SIS family. GmhA subfamily. Homotetramer. Requires Zn(2+) as cofactor.

It is found in the cytoplasm. The catalysed reaction is 2 D-sedoheptulose 7-phosphate = D-glycero-alpha-D-manno-heptose 7-phosphate + D-glycero-beta-D-manno-heptose 7-phosphate. The protein operates within carbohydrate biosynthesis; D-glycero-D-manno-heptose 7-phosphate biosynthesis; D-glycero-alpha-D-manno-heptose 7-phosphate and D-glycero-beta-D-manno-heptose 7-phosphate from sedoheptulose 7-phosphate: step 1/1. Catalyzes the isomerization of sedoheptulose 7-phosphate in D-glycero-D-manno-heptose 7-phosphate. This Syntrophotalea carbinolica (strain DSM 2380 / NBRC 103641 / GraBd1) (Pelobacter carbinolicus) protein is Phosphoheptose isomerase.